The primary structure comprises 388 residues: Calreticulin (388 aa).

The signal sequence occupies residues 1 to 17 (MQLSLLVGLVCFSAINA). An intrachain disulfide couples C103 to C135. Positions 107, 109, 126, and 133 each coordinate an alpha-D-glucoside. 7 consecutive repeat copies span residues 189–200 (AESGELEADWDF), 208–219 (DPDAKKPEDWDE), 225–236 (DEDDKKPEDWDK), 242–253 (DPDAKKPEDWDD), 257–267 (GEWEPPMVDNP), 271–281 (GEWKPKQKKNP), and 285–295 (GKWIHPEIEIP). The tract at residues 189 to 253 (AESGELEADW…DAKKPEDWDD (65 aa)) is 4 X approximate repeats. A disordered region spans residues 193-282 (ELEADWDFLP…WKPKQKKNPA (90 aa)). Basic and acidic residues predominate over residues 205–215 (KIKDPDAKKPE). Residues 216–227 (DWDEREFIDDED) are compositionally biased toward acidic residues. A compositionally biased stretch (basic and acidic residues) spans 228 to 249 (DKKPEDWDKPEHIPDPDAKKPE). Positions 250 to 259 (DWDDEMDGEW) are enriched in acidic residues. Residues 257–295 (GEWEPPMVDNPEYKGEWKPKQKKNPAYKGKWIHPEIEIP) form a 3 X approximate repeats region. Position 315 (D315) interacts with an alpha-D-glucoside. The disordered stretch occupies residues 349–388 (REGEKKKGKKTKKQKKKEKNEKIKKEKMKKRKRANRKKKK). Composition is skewed to basic residues over residues 354 to 365 (KKGKKTKKQKKK) and 373 to 388 (KEKMKKRKRANRKKKK).

The protein belongs to the calreticulin family.

The protein resides in the endoplasmic reticulum lumen. Functionally, molecular calcium-binding chaperone promoting folding, oligomeric assembly and quality control in the ER via the calreticulin/calnexin cycle. This lectin may interact transiently with almost all of the monoglucosylated glycoproteins that are synthesized in the ER. This Onchocerca volvulus protein is Calreticulin (crt-1).